Consider the following 421-residue polypeptide: Gamma-glutamyl phosphate reductase (421 aa).

It belongs to the gamma-glutamyl phosphate reductase family.

It localises to the cytoplasm. It catalyses the reaction L-glutamate 5-semialdehyde + phosphate + NADP(+) = L-glutamyl 5-phosphate + NADPH + H(+). The protein operates within amino-acid biosynthesis; L-proline biosynthesis; L-glutamate 5-semialdehyde from L-glutamate: step 2/2. Its function is as follows. Catalyzes the NADPH-dependent reduction of L-glutamate 5-phosphate into L-glutamate 5-semialdehyde and phosphate. The product spontaneously undergoes cyclization to form 1-pyrroline-5-carboxylate. In Acinetobacter baylyi (strain ATCC 33305 / BD413 / ADP1), this protein is Gamma-glutamyl phosphate reductase.